A 990-amino-acid chain; its full sequence is Serine/threonine-protein phosphatase 6 regulatory ankyrin repeat subunit B (990 aa).

ANK repeat units lie at residues 7 to 36 (ADQP…DVNA), 40 to 69 (EKRT…RVNA), 73 to 102 (MWLT…DVNA), 106 to 135 (NWQT…SVNV), 139 to 168 (GGRT…NINA), 172 to 201 (KDRR…EVTC), 205 to 234 (KGYT…EIDE), 238 to 267 (YGNT…NVNQ), 271 to 301 (NGFT…DVNI), 305 to 334 (DGKS…EIDC), 338 to 367 (DGNT…DTAK), 371 to 400 (HNMF…EIDT), 404 to 433 (FGRT…DFNK), 437 to 466 (RGRT…NINE), 470 to 499 (WGRT…NAEE), 531 to 560 (EGYN…NMFE), 566 to 595 (ATKS…DLDI), 599 to 628 (KGRT…SVTV), 633 to 662 (TKRT…NPDV), 666 to 695 (KGQT…SVDA), 699 to 728 (LGCT…SILC), 732 to 761 (RGRT…SEED), 768 to 797 (QGYT…FRKF), 800 to 829 (NSFS…ASIV), 835 to 864 (KGRT…QVNA), 868 to 898 (AGKT…DLTL), 902 to 931 (DSNT…EQSL), and 938 to 967 (SLQT…CVLA).

In terms of assembly, protein phosphatase 6 (PP6) holoenzyme is proposed to be a heterotrimeric complex formed by the catalytic subunit, a SAPS domain-containing subunit (PP6R) and an ankyrin repeat-domain containing regulatory subunit (ARS).

Functionally, putative regulatory subunit of protein phosphatase 6 (PP6) that may be involved in the recognition of phosphoprotein substrates. The polypeptide is Serine/threonine-protein phosphatase 6 regulatory ankyrin repeat subunit B (ANKRD44) (Gallus gallus (Chicken)).